A 201-amino-acid chain; its full sequence is Small ribosomal subunit protein uS4 (201 aa).

Residues 91–157 form the S4 RNA-binding domain; sequence CRLDNVVYRA…TPFIIAKETI (67 aa).

It belongs to the universal ribosomal protein uS4 family. In terms of assembly, part of the 30S ribosomal subunit. Contacts protein S5. The interaction surface between S4 and S5 is involved in control of translational fidelity.

Its function is as follows. One of the primary rRNA binding proteins, it binds directly to 16S rRNA where it nucleates assembly of the body of the 30S subunit. In terms of biological role, with S5 and S12 plays an important role in translational accuracy. The protein is Small ribosomal subunit protein uS4 of Saccharopolyspora erythraea (strain ATCC 11635 / DSM 40517 / JCM 4748 / NBRC 13426 / NCIMB 8594 / NRRL 2338).